Consider the following 488-residue polypeptide: Probable metabolite transport protein YBR241C (488 aa).

Residues 1–18 (MAETERLMPNGGSRETKP) lie on the Cytoplasmic side of the membrane. Residues 19-39 (LITGHLILGTIVACLGSIQYG) form a helical membrane-spanning segment. The Vacuolar segment spans residues 40–87 (YHIAELNAPQEFLSCSRFEAPDENISYDDTWVGQHGLKQCIALTDSQY). An N-linked (GlcNAc...) asparagine glycan is attached at N63. A helical membrane pass occupies residues 88-108 (GAITSIFSIGGLFGSYYAGNW). Residues 109–121 (ANRYGRKYVSMGA) lie on the Cytoplasmic side of the membrane. Residues 122-142 (SAMCMVSSLLLFFSNSYLQLL) traverse the membrane as a helical segment. Residues 143–146 (FGRF) are Vacuolar-facing. Residues 147 to 167 (LVGMSCGTAIVITPLFINEIA) form a helical membrane-spanning segment. Topologically, residues 168-178 (PVEWRGAMGSM) are cytoplasmic. The helical transmembrane segment at 179–198 (NQVSINLGILLTQTLALKYA) threads the bilayer. Topologically, residues 199–204 (DSYNWR) are vacuolar. The chain crosses the membrane as a helical span at residues 205–225 (WLLFSGSVIAVANILAWLKVD). Over 226-299 (ESPRWLVSHG…DPSYKKPRTV (74 aa)) the chain is Cytoplasmic. Basic and acidic residues predominate over residues 258 to 279 (EIQDWQRSHGHNRDPESSEETH). The tract at residues 258 to 281 (EIQDWQRSHGHNRDPESSEETHSG) is disordered. Residues 300-320 (ILAILSCQQFCGINSIIFYGV) traverse the membrane as a helical segment. The Vacuolar portion of the chain corresponds to 321–322 (KV). The chain crosses the membrane as a helical span at residues 323–337 (IGKILPDYSIQVNFA). Over 338 to 344 (ISILNVV) the chain is Cytoplasmic. A helical transmembrane segment spans residues 345 to 364 (VTLAASAIIDHVGRRPLLLA). Residues 365–390 (STTVMTAMSLLISVGLTLSVSFLLVT) lie on the Vacuolar side of the membrane. The chain crosses the membrane as a helical span at residues 391 to 411 (ATFVYIAAFAIGLGPIPFLII). At 412–419 (GELSYPQD) the chain is on the cytoplasmic side. Residues 420–442 (AATAQSFGTVCNWLATFIVGYLF) traverse the membrane as a helical segment. The Vacuolar segment spans residues 443–446 (PIGH). Residues 447 to 463 (GLMGGYVFAIFAAIAAM) traverse the membrane as a helical segment. The Cytoplasmic segment spans residues 464-488 (FATYVYKRVPETKGKTTYSEVWAGY).

It belongs to the major facilitator superfamily. Sugar transporter (TC 2.A.1.1) family.

Its subcellular location is the vacuole membrane. The sequence is that of Probable metabolite transport protein YBR241C from Saccharomyces cerevisiae (strain ATCC 204508 / S288c) (Baker's yeast).